Here is a 148-residue protein sequence, read N- to C-terminus: Hemoglobin subunit beta-4 (148 aa).

The 146-residue stretch at 3-148 (DWTDPERSAI…VVSALGRQYH (146 aa)) folds into the Globin domain. Heme b-binding residues include histidine 64 and histidine 93.

This sequence belongs to the globin family. In terms of assembly, heterotetramer of two alpha chains and two beta chains. As to expression, red blood cells.

Its function is as follows. Involved in oxygen transport from gills to the various peripheral tissues. In Oncorhynchus mykiss (Rainbow trout), this protein is Hemoglobin subunit beta-4 (hbb4).